Here is a 270-residue protein sequence, read N- to C-terminus: tRNA pseudouridine synthase A (270 aa).

The active-site Nucleophile is the Asp60. The segment at 107 to 111 (FHARF) is RNA binding. Residue Tyr118 participates in substrate binding. The segment at 168–172 (QCQSR) is interaction with tRNA.

Belongs to the tRNA pseudouridine synthase TruA family. In terms of assembly, homodimer.

It carries out the reaction uridine(38/39/40) in tRNA = pseudouridine(38/39/40) in tRNA. Functionally, formation of pseudouridine at positions 38, 39 and 40 in the anticodon stem and loop of transfer RNAs. The sequence is that of tRNA pseudouridine synthase A from Escherichia coli (strain K12 / DH10B).